A 327-amino-acid chain; its full sequence is MHPQQLVVSWFSLVLLASPIVAIWELEKNVYIVELDWYPDAPGETVVLTCDTPEEDGITWTSDQSSEVLGSGKTLTIQVKEFGDAGQYTCHKGGEALSRSLLLLHKKEDGIWSTDILKDQKEPKAKSFLKCEAKDYSGHFTCWWLTAISTDLKFSVKSSRGSSDPRGVTCGAASLSAEKVSVDHREYNKYTVECQEGSTCPAAEESLLIEVVVEAVHKLKYENYTSSFFIRDIIKPDPPKNLQLRPLKNSRQVEVSWEYPDTWSTPHSYFSLTFCVQVQGKNKREKKLFMDQTSAKVTCHKDANVRVQARDRYYSSFWSEWASVSCS.

The N-terminal stretch at 1-22 is a signal peptide; that stretch reads MHPQQLVVSWFSLVLLASPIVA. Residues 23-106 enclose the Ig-like C2-type domain; sequence IWELEKNVYI…LSRSLLLLHK (84 aa). Residues cysteine 50 and cysteine 90 are joined by a disulfide bond. A glycan (N-linked (GlcNAc...) asparagine) is linked at asparagine 223. The region spanning 238–327 is the Fibronectin type-III domain; the sequence is PPKNLQLRPL…WSEWASVSCS (90 aa).

This sequence belongs to the IL-12B family. As to quaternary structure, heterodimer with IL12A; disulfide-linked. The heterodimer is known as interleukin IL-12. Heterodimer with IL23A; disulfide-linked. The heterodimer is known as interleukin IL-23. Also secreted as a monomer. Interacts with NBR1; this interaction promotes IL-12 secretion.

Its subcellular location is the secreted. Cytokine that can act as a growth factor for activated T and NK cells, enhance the lytic activity of NK/lymphokine-activated killer cells, and stimulate the production of IFN-gamma by resting PBMC. The polypeptide is Interleukin-12 subunit beta (IL12B) (Bubalus carabanensis (Swamp type water buffalo)).